The chain runs to 95 residues: Citrate lyase acyl carrier protein (95 aa).

An O-(phosphoribosyl dephospho-coenzyme A)serine modification is found at Ser14.

The protein belongs to the CitD family. In terms of assembly, oligomer with a subunit composition of (alpha,beta,gamma)6.

It is found in the cytoplasm. Covalent carrier of the coenzyme of citrate lyase. This chain is Citrate lyase acyl carrier protein, found in Haemophilus ducreyi (strain 35000HP / ATCC 700724).